The chain runs to 290 residues: Ribosomal RNA small subunit methyltransferase A (290 aa).

S-adenosyl-L-methionine contacts are provided by Asn-27, Leu-29, Gly-54, Glu-75, Asp-100, and Asn-125.

The protein belongs to the class I-like SAM-binding methyltransferase superfamily. rRNA adenine N(6)-methyltransferase family. RsmA subfamily.

The protein resides in the cytoplasm. The enzyme catalyses adenosine(1518)/adenosine(1519) in 16S rRNA + 4 S-adenosyl-L-methionine = N(6)-dimethyladenosine(1518)/N(6)-dimethyladenosine(1519) in 16S rRNA + 4 S-adenosyl-L-homocysteine + 4 H(+). Specifically dimethylates two adjacent adenosines (A1518 and A1519) in the loop of a conserved hairpin near the 3'-end of 16S rRNA in the 30S particle. May play a critical role in biogenesis of 30S subunits. The sequence is that of Ribosomal RNA small subunit methyltransferase A from Streptococcus uberis (strain ATCC BAA-854 / 0140J).